The following is a 544-amino-acid chain: CTP synthase (544 aa).

The tract at residues 1-266 is amidoligase domain; sequence MIRYIFITGG…DSEVLSHFGI (266 aa). Ser13 is a CTP binding site. A UTP-binding site is contributed by Ser13. ATP-binding positions include 14–19 and Asp71; that span reads SLGKGI. Mg(2+) is bound by residues Asp71 and Glu140. CTP contacts are provided by residues 147–149, 187–192, and Lys223; these read DIE and KTKPTQ. Residues 187-192 and Lys223 contribute to the UTP site; that span reads KTKPTQ. An ATP-binding site is contributed by 239 to 241; the sequence is RDV. Residues 292-543 enclose the Glutamine amidotransferase type-1 domain; the sequence is TIGLVGKYTD…IAAAVKQSRL (252 aa). Residue Gly355 participates in L-glutamine binding. Cys382 functions as the Nucleophile; for glutamine hydrolysis in the catalytic mechanism. Residues 383–386, Glu406, and Arg471 each bind L-glutamine; that span reads YGMQ. Residues His516 and Glu518 contribute to the active site.

This sequence belongs to the CTP synthase family. In terms of assembly, homotetramer.

The enzyme catalyses UTP + L-glutamine + ATP + H2O = CTP + L-glutamate + ADP + phosphate + 2 H(+). The catalysed reaction is L-glutamine + H2O = L-glutamate + NH4(+). It carries out the reaction UTP + NH4(+) + ATP = CTP + ADP + phosphate + 2 H(+). It functions in the pathway pyrimidine metabolism; CTP biosynthesis via de novo pathway; CTP from UDP: step 2/2. Its activity is regulated as follows. Allosterically activated by GTP, when glutamine is the substrate; GTP has no effect on the reaction when ammonia is the substrate. The allosteric effector GTP functions by stabilizing the protein conformation that binds the tetrahedral intermediate(s) formed during glutamine hydrolysis. Inhibited by the product CTP, via allosteric rather than competitive inhibition. Functionally, catalyzes the ATP-dependent amination of UTP to CTP with either L-glutamine or ammonia as the source of nitrogen. Regulates intracellular CTP levels through interactions with the four ribonucleotide triphosphates. This is CTP synthase from Hyphomonas neptunium (strain ATCC 15444).